Reading from the N-terminus, the 90-residue chain is Small ribosomal subunit protein bS20 (90 aa).

The tract at residues 1 to 21 (MANHKSALKRVRQTKKRTERN) is disordered.

Belongs to the bacterial ribosomal protein bS20 family.

Its function is as follows. Binds directly to 16S ribosomal RNA. The protein is Small ribosomal subunit protein bS20 of Nitratiruptor sp. (strain SB155-2).